A 670-amino-acid chain; its full sequence is Nitrate import ATP-binding protein NrtC (670 aa).

An ABC transporter domain is found at 5–239; the sequence is IEIDHVDRIF…RPRHRLEVVN (235 aa). 42–49 provides a ligand contact to ATP; it reads GHSGCGKS. A linker region spans residues 255–278; it reads NQQKRAKKVGAVSQFAEAMGGNGL. Positions 279-670 are nrtA-like; that stretch reads EKINLDLGFI…LIDQIDQVNQ (392 aa).

The protein belongs to the ABC transporter superfamily. Nitrate/nitrite/cyanate uptake transporter (NitT) (TC 3.A.1.16) family. As to quaternary structure, the complex is composed of two ATP-binding proteins (NrtC and NrtD), two transmembrane proteins (NrtB) and a solute-binding protein (NrtA).

The protein localises to the cell inner membrane. It carries out the reaction nitrate(out) + ATP + H2O = nitrate(in) + ADP + phosphate + H(+). Its function is as follows. Part of the ABC transporter complex NrtABCD involved in nitrate uptake. The complex is probably also involved in nitrite transport. Probably responsible for energy coupling to the transport system. The chain is Nitrate import ATP-binding protein NrtC (nrtC) from Synechocystis sp. (strain ATCC 27184 / PCC 6803 / Kazusa).